The chain runs to 472 residues: MQRLRWLLLLIVVLVIGASFVLVKLPLQLGLDLRGGAQLTIEVQPTKEIPQIDNDSLVAVKTVIENRVNALGVSEPLVQTAGEDKIVVQLPGVTDPGQAERILGGTAQLEFQQQRPGTEGEFQAEYSIKRQLDAELENLRRSGASPENSDRLEELIKAKEESNKALLALFEPMGLTGKNLTDARPSPNQSGTAWEVALRFDEEGGQKFAELTQAVAGTGRSLGVFLDNDLISAPVVGVEFANTGITGGAAVITGNFTIDTANDLAVQLRGGSLPFPVEVVENRTVGATLGQESIRRSLVAGFVGLVLVLVFMAVYYRLPGIVADISLMIYAVLTLAAFALVGVTLTLPGIAGFILSIGMAVDANVLIFERTREELRAGNTLYRSVEAGFFRAFSSILDSNVTTLIACAALFWFGSGLVKGFALTLAIGVMVSLFTALTCSRTLLLVIVLSLPKVRQNPRLFCPNLSSVTAKS.

Helical transmembrane passes span 7-27, 298-318, 326-345, 349-368, 392-414, and 432-452; these read LLLL…KLPL, LVAG…YYRL, SLMI…GVTL, GIAG…VLIF, AFSS…FWFG, and SLFT…LSLP.

The protein belongs to the SecD/SecF family. SecD subfamily. In terms of assembly, forms a complex with SecF. Part of the essential Sec protein translocation apparatus which comprises SecA, SecYEG and auxiliary proteins SecDF. Other proteins may also be involved.

The protein resides in the cell inner membrane. Its function is as follows. Part of the Sec protein translocase complex. Interacts with the SecYEG preprotein conducting channel. SecDF uses the proton motive force (PMF) to complete protein translocation after the ATP-dependent function of SecA. In terms of biological role, probably participates in protein translocation into and across both the cytoplasmic and thylakoid membranes in cyanobacterial cells. In Synechocystis sp. (strain ATCC 27184 / PCC 6803 / Kazusa), this protein is Protein translocase subunit SecD.